The following is a 249-amino-acid chain: tRNA pseudouridine synthase A (249 aa).

The Nucleophile role is filled by Asp52. Tyr111 lines the substrate pocket.

The protein belongs to the tRNA pseudouridine synthase TruA family. As to quaternary structure, homodimer.

The enzyme catalyses uridine(38/39/40) in tRNA = pseudouridine(38/39/40) in tRNA. Functionally, formation of pseudouridine at positions 38, 39 and 40 in the anticodon stem and loop of transfer RNAs. This is tRNA pseudouridine synthase A from Brachyspira hyodysenteriae (strain ATCC 49526 / WA1).